Consider the following 580-residue polypeptide: N(6)-adenosine-methyltransferase catalytic subunit METTL3 (580 aa).

The tract at residues 1 to 70 is disordered; sequence MSDTWSSIQA…PKPSTASAVP (70 aa). Ser-2 carries the post-translational modification N-acetylserine; alternate. Ser-2 carries the post-translational modification Phosphoserine; alternate. Residues 28–37 show a composition bias toward basic and acidic residues; it reads QDSGHLDLRN. Phosphoserine occurs at positions 43, 48, and 50. Residues Lys-177, Lys-211, Lys-212, and Lys-215 each participate in a glycyl lysine isopeptide (Lys-Gly) (interchain with G-Cter in SUMO1) cross-link. The segment at 198-219 is disordered; the sequence is LNSSASEPAKEPAKKSRKHAAS. Residues 210–215 carry the Nuclear localization signal motif; it reads AKKSRK. A phosphoserine mark is found at Ser-219 and Ser-243. Thr-348 is subject to Phosphothreonine. Ser-350 bears the Phosphoserine mark. S-adenosyl-L-methionine-binding positions include 377–378 and Asp-395; that span reads DI. The gate loop 1 stretch occupies residues 396–410; sequence PPWDIHMELPYGTLT. Interaction with METTL14 stretches follow at residues 450 to 454 and 464 to 480; these read ERVDE and QRIIRTGRTGHWLNHGK. The tract at residues 462–479 is interphase loop; sequence QLQRIIRTGRTGHWLNHG. A positively charged region required for RNA-binding region spans residues 465 to 478; it reads RIIRTGRTGHWLNH. The segment at 507–515 is gate loop 2; that stretch reads VRSTSHKPD. Residues Lys-513, 536 to 539, and 549 to 550 contribute to the S-adenosyl-L-methionine site; these read RPHN and NQ.

The protein belongs to the MT-A70-like family. In terms of assembly, heterodimer; heterodimerizes with METTL14 to form an antiparallel heterodimer that constitutes an active methyltransferase. Component of the WMM complex, a N6-methyltransferase complex composed of a catalytic subcomplex, named MAC, and of an associated subcomplex, named MACOM. The MAC subcomplex is composed of METTL3 and METTL14. The MACOM subcomplex is composed of WTAP, ZC3H13, CBLL1/HAKAI, VIRMA, and, in some cases of RBM15 (RBM15 or RBM15B). Interacts with NCBP1/CBP80. Interacts with EIF4E. Interacts with EIF3B. In terms of processing, sumoylation inhibits the N6-adenosine-methyltransferase activity. Sumoylation does not affect subcellular location or interaction with METTL14. Desumoylated by SENP1. Widely expressed at low level. Expressed in spleen, thymus, prostate, testis, ovary, small intestine, colon and peripheral blood leukocytes.

The protein resides in the nucleus. It is found in the nucleus speckle. It localises to the cytoplasm. The enzyme catalyses an adenosine in mRNA + S-adenosyl-L-methionine = an N(6)-methyladenosine in mRNA + S-adenosyl-L-homocysteine + H(+). With respect to regulation, methyltransferase activity is regulated by miRNAs via a sequence pairing mechanism. Methyltransferase activity is inhibited by sumoylation. Functionally, the METTL3-METTL14 heterodimer forms a N6-methyltransferase complex that methylates adenosine residues at the N(6) position of some RNAs and regulates various processes such as the circadian clock, differentiation of embryonic and hematopoietic stem cells, cortical neurogenesis, response to DNA damage, differentiation of T-cells and primary miRNA processing. In the heterodimer formed with METTL14, METTL3 constitutes the catalytic core. N6-methyladenosine (m6A), which takes place at the 5'-[AG]GAC-3' consensus sites of some mRNAs, plays a role in mRNA stability, processing, translation efficiency and editing. M6A acts as a key regulator of mRNA stability: methylation is completed upon the release of mRNA into the nucleoplasm and promotes mRNA destabilization and degradation. In embryonic stem cells (ESCs), m6A methylation of mRNAs encoding key naive pluripotency-promoting transcripts results in transcript destabilization, promoting differentiation of ESCs. M6A regulates the length of the circadian clock: acts as an early pace-setter in the circadian loop by putting mRNA production on a fast-track for facilitating nuclear processing, thereby providing an early point of control in setting the dynamics of the feedback loop. M6A also regulates circadian regulation of hepatic lipid metabolism. M6A regulates spermatogonial differentiation and meiosis and is essential for male fertility and spermatogenesis. Also required for oogenesis. Involved in the response to DNA damage: in response to ultraviolet irradiation, METTL3 rapidly catalyzes the formation of m6A on poly(A) transcripts at DNA damage sites, leading to the recruitment of POLK to DNA damage sites. M6A is also required for T-cell homeostasis and differentiation: m6A methylation of transcripts of SOCS family members (SOCS1, SOCS3 and CISH) in naive T-cells promotes mRNA destabilization and degradation, promoting T-cell differentiation. Inhibits the type I interferon response by mediating m6A methylation of IFNB. M6A also takes place in other RNA molecules, such as primary miRNA (pri-miRNAs). Mediates m6A methylation of Xist RNA, thereby participating in random X inactivation: m6A methylation of Xist leads to target YTHDC1 reader on Xist and promote transcription repression activity of Xist. M6A also regulates cortical neurogenesis: m6A methylation of transcripts related to transcription factors, neural stem cells, the cell cycle and neuronal differentiation during brain development promotes their destabilization and decay, promoting differentiation of radial glial cells. METTL3 mediates methylation of pri-miRNAs, marking them for recognition and processing by DGCR8. Acts as a positive regulator of mRNA translation independently of the methyltransferase activity: promotes translation by interacting with the translation initiation machinery in the cytoplasm. Its overexpression in a number of cancer cells suggests that it may participate in cancer cell proliferation by promoting mRNA translation. During human coronavirus SARS-CoV-2 infection, adds m6A modifications in SARS-CoV-2 RNA leading to decreased RIGI binding and subsequently dampening the sensing and activation of innate immune responses. In Homo sapiens (Human), this protein is N(6)-adenosine-methyltransferase catalytic subunit METTL3.